The sequence spans 745 residues: 5-methyltetrahydropteroyltriglutamate--homocysteine methyltransferase (745 aa).

5-methyltetrahydropteroyltri-L-glutamate contacts are provided by residues 17-20 and Lys-111; that span reads RELK. Residues 421–423 and Glu-474 each bind L-homocysteine; that span reads IGS. Residues 421–423 and Glu-474 each bind L-methionine; that span reads IGS. Residues 505–506 and Trp-551 each bind 5-methyltetrahydropteroyltri-L-glutamate; that span reads RC. Asp-589 is a binding site for L-homocysteine. An L-methionine-binding site is contributed by Asp-589. 5-methyltetrahydropteroyltri-L-glutamate is bound at residue Glu-595. His-631, Cys-633, and Glu-655 together coordinate Zn(2+). His-684 functions as the Proton donor in the catalytic mechanism. A Zn(2+)-binding site is contributed by Cys-716.

This sequence belongs to the vitamin-B12 independent methionine synthase family. The cofactor is Zn(2+).

It catalyses the reaction 5-methyltetrahydropteroyltri-L-glutamate + L-homocysteine = tetrahydropteroyltri-L-glutamate + L-methionine. Its pathway is amino-acid biosynthesis; L-methionine biosynthesis via de novo pathway; L-methionine from L-homocysteine (MetE route): step 1/1. Its function is as follows. Catalyzes the transfer of a methyl group from 5-methyltetrahydrofolate to homocysteine resulting in methionine formation. The sequence is that of 5-methyltetrahydropteroyltriglutamate--homocysteine methyltransferase from Thermodesulfovibrio yellowstonii (strain ATCC 51303 / DSM 11347 / YP87).